A 138-amino-acid polypeptide reads, in one-letter code: Homeobox protein HD-11 (138 aa).

The homeobox DNA-binding region spans 30–89; that stretch reads CTGKQMRKTRLQTCVLNRIFEISRFPSSKTIVDLALLINVHPKSIQKWFQNTRQAIRKKG.

It localises to the nucleus. This Encephalitozoon cuniculi (strain GB-M1) (Microsporidian parasite) protein is Homeobox protein HD-11 (HD-11).